We begin with the raw amino-acid sequence, 777 residues long: Ribosome-releasing factor 2, mitochondrial (777 aa).

A tr-type G domain is found at 68–353 (AKIRNIGIMA…AVTMYLPSPE (286 aa)). Residues 77–84 (AHIDAGKT), 141–145 (DTPGH), and 195–198 (NKMD) contribute to the GTP site.

It belongs to the TRAFAC class translation factor GTPase superfamily. Classic translation factor GTPase family. EF-G/EF-2 subfamily.

The protein localises to the mitochondrion. The enzyme catalyses GTP + H2O = GDP + phosphate + H(+). Mitochondrial GTPase that mediates the disassembly of ribosomes from messenger RNA at the termination of mitochondrial protein biosynthesis. Acts in collaboration with MRRF. GTP hydrolysis follows the ribosome disassembly and probably occurs on the ribosome large subunit. Not involved in the GTP-dependent ribosomal translocation step during translation elongation. The polypeptide is Ribosome-releasing factor 2, mitochondrial (Pongo abelii (Sumatran orangutan)).